A 417-amino-acid polypeptide reads, in one-letter code: Actin-like protein 7B (417 aa).

The disordered stretch occupies residues Met-1 to Gln-39. At Ser-8 the chain carries Phosphoserine.

The protein belongs to the actin family.

It localises to the cytoplasm. The protein resides in the cytoskeleton. The polypeptide is Actin-like protein 7B (Actl7b) (Rattus norvegicus (Rat)).